A 578-amino-acid polypeptide reads, in one-letter code: Phosphoenolpyruvate-protein phosphotransferase (578 aa).

The active-site Tele-phosphohistidine intermediate is the His-195. Phosphoenolpyruvate contacts are provided by Arg-302 and Arg-338. 2 residues coordinate Mg(2+): Glu-437 and Asp-461. Residues 460-461 and Arg-471 contribute to the phosphoenolpyruvate site; that span reads ND. Catalysis depends on Cys-508, which acts as the Proton donor.

Belongs to the PEP-utilizing enzyme family. As to quaternary structure, homodimer. Requires Mg(2+) as cofactor.

The protein localises to the cytoplasm. It carries out the reaction L-histidyl-[protein] + phosphoenolpyruvate = N(pros)-phospho-L-histidyl-[protein] + pyruvate. Functionally, general (non sugar-specific) component of the phosphoenolpyruvate-dependent sugar phosphotransferase system (sugar PTS). This major carbohydrate active-transport system catalyzes the phosphorylation of incoming sugar substrates concomitantly with their translocation across the cell membrane. Enzyme I transfers the phosphoryl group from phosphoenolpyruvate (PEP) to the phosphoryl carrier protein (HPr). In Geobacillus stearothermophilus (Bacillus stearothermophilus), this protein is Phosphoenolpyruvate-protein phosphotransferase (ptsI).